A 79-amino-acid polypeptide reads, in one-letter code: MESIEQRVKKIVAEQLGVNEAEIKNESSFLDDLGADSLDMVELVMALEDEFETEIPDEEAEKITTVQQAVDYINSHGKQ.

Residues 2-77 (ESIEQRVKKI…QAVDYINSHG (76 aa)) form the Carrier domain. The residue at position 37 (Ser-37) is an O-(pantetheine 4'-phosphoryl)serine.

It belongs to the acyl carrier protein (ACP) family. In terms of processing, 4'-phosphopantetheine is transferred from CoA to a specific serine of apo-ACP by AcpS. This modification is essential for activity because fatty acids are bound in thioester linkage to the sulfhydryl of the prosthetic group.

Its subcellular location is the cytoplasm. It participates in lipid metabolism; fatty acid biosynthesis. Carrier of the growing fatty acid chain in fatty acid biosynthesis. In Bordetella parapertussis (strain 12822 / ATCC BAA-587 / NCTC 13253), this protein is Acyl carrier protein.